We begin with the raw amino-acid sequence, 534 residues long: Endoglucanase 5 (534 aa).

A signal peptide spans 1 to 27 (MSDVSGRFVVAAAVVAVSLAMAAAAAA). D82 functions as the Nucleophile in the catalytic mechanism. Active-site residues include H432, D484, and E493. The interval 515–534 (RRRGEDAPPSSTSPVAEDDL) is disordered.

This sequence belongs to the glycosyl hydrolase 9 (cellulase E) family.

The protein localises to the secreted. The enzyme catalyses Endohydrolysis of (1-&gt;4)-beta-D-glucosidic linkages in cellulose, lichenin and cereal beta-D-glucans.. The polypeptide is Endoglucanase 5 (Oryza sativa subsp. japonica (Rice)).